A 504-amino-acid chain; its full sequence is MEEFQGYLELDKSRQHDFLYPLIFQEYIYALAHDHGLNRSILLENVGYDNKSSSLIVKRLITRMYQQNHLIISVNDSNQNPFLGHNKNLYSQMISEGFAVIVEIPFSLRSVSSLEGKEIVQSHNLRSIHSIFPFLEDKFLHLNYVSDILIPHPIHLEILVQTLRYWVKDASSLHLLRFFFYEYYNWNSLITPKKSISIFSKRNQRLFLFLYNSHVCEYESIFLFFRNQSSYLRSTSSGALLERIYFYGKIKHLVEVFVNDFQAILWLFKDPFMHYVRYQGKSILASKGTPLLMNKWKYYLVNFWQCHFYVWSQPGRIYINQLSNHSFDFLGYLSSVGLNPSVVRSQMLENSFIIDNAIKKFDIIVPIIPLIGSLAKAKFCNVLGHPISKPARADSSDSDIIDRFVRICRNLSHYHSGSSKKKSLYRIKYILRLSCARTLARKHKSTVRAFLKRLGSGLLEEFLTEEEQVLSLIFPKASSTSRRLYRGRIWYFDIISINDLANYE.

Belongs to the intron maturase 2 family. MatK subfamily.

The protein localises to the plastid. It localises to the chloroplast. Its function is as follows. Usually encoded in the trnK tRNA gene intron. Probably assists in splicing its own and other chloroplast group II introns. The chain is Maturase K from Hamamelis virginiana (Witch-hazel).